The following is a 2864-amino-acid chain: MPVISTQTSPVPAPRTRKNKQTQASYPVSIKTSVERGQRAKRKVQRDARPRNYKIAGIHDGLQTLAQAALPAHGWGRQDPRHKSRNLGILLDYPLGWIGDVTTHTPLVGPLVAGAVVRPVCQIVRLLEDGVNWATGWFGVHLFVVCLLSLACPCSGARVTDPDTNTTILTNCCQRNQVIYCSPSTCLHEPGCVICADECWVPANPYISHPSNWTGTDSFLADHIDFVMGALVTCDALDIGELCGACVLVGDWLVRHWLIHIDLNETGTCYLEVPTGIDPGFLGFIGWMAGKVEAVIFLTKLASQVPYAIATMFSSVHYLAVGALIYYASRGKWYQLLLALMLYIEATSGNPIRVPTGCSIAEFCSPLMIPCPCHSYLSENVSEVICYSPKWTRPVTLEYNNSISWYPYTIPGARGCMVKFKNNTWGCCRIRNVPSYCTMGTDAVWNDTRNTYEACGVTPWLTTAWHNGSALKLAILQYPGSKEMFKPHNWMSGHLYFEGSDTPIVYFYDPVNSTLLPPERWARLPGTPPVVRGSWLQVPQGFYSDVKDLATGLITKDKAWKNYQVLYSATGALSLTGVTTKAVVLILLGLCGSKYLILAYLCYLSLCFGRASGYPLRPVLPSQSYLQAGWDVLSKAQVAPFALIFFICCYLRCRLRYAALLGFVPMAAGLPLTFFVAAAAAQPDYDWWVRLLVAGLVLWAGRDRGPRIALLVGPWPLVALLTLLHLATPASAFDTEIIGGLTIPPVVALVVMSRFGFFAHLLPRCALVNSYLWQRWENWFWNVTLRPERFLLVLVCFPGATYDTLVTFCVCHVALLCLTSSAASFFGTDSRVRAHRMLVRLGKCHAWYSHYVLKFFLLVFGENGVFFYKHLHGDVLPNDFASKLPLQEPFFPFEGKARVYRNEGRRLACGDTVDGLPVVARLGDLVFAGLAMPPDGWAITAPFTLQCLSERGTLSAMAVVMTGIDPRTWTGTIFRLGSLATSYMGFVCDNVLYTAHHGSKGRRLAHPTGSIHPITVDAANDQDIYQPPCGAGSLTRCSCGETKGYLVTRLGSLVEVNKSDDPYWCVCGALPMAVAKGSSGAPILCSSGHVIGMFTAARNSGGSVSQIRVRPLVCAGYHPQYTAHATLDTKPTVPNEYSVQILIAPTGSGKSTKLPLSYMQEKYEVLVLNPSVATTASMPKYMHATYGVNPNCYFNGKCTNTGASLTYSTYGMYLTGACSRNYDVIICDECHATDATTVLGIGKVLTEAPSKNVRLVVLATATPPGVIPTPHANITEIQLTDEGTIPFHGKKIKEENLKKGRHLIFEATKKHCDELANELARKGITAVSYYRGCDISKIPEGDCVVVATDALCTGYTGDFDSVYDCSLMVEGTCHVDLDPTFTMGVRVCGVSAIVKGQRRGRTGRGRAGIYYYVDGSCTPSGMVPECNIVEAFDAAKAWYGLSSTEAQTILDTYRTQPGLPAIGANLDEWADLFSMVNPEPSFVNTAKRTADNYVLLTAAQLQLCHQYGYAAPNDAPRWQGARLGKKPCGVLWRLDGADACPGPEPSEVTRYQMCFTEVNTSGTAALAVGVGVAMAYLAIDTFGATCVRRCWSITSVPTGATVAPVVDEEEIVEECASFIPLEAMVAAIDKLKSTITTTSPFTLETALEKLNTFLGPHAATILAIIEYCCGLVTLPDNPFASCVFAFIAGITTPLPHKIKMFLSLFGGAIASKLTDARGALAFMMAGAAGTALGTWTSVGFVFDMLGGYAAASSTACLTFKCLMGEWPTMDQLAGLVYSAFNPAAGVVGVLSACAMFALTTAGPDHWPNRLLTMLARSNTVCNEYFIATRDIRRKILGILEASTPWSVISACIRWLHTPTEDDCGLIAWGLEIWQYVCNFFVICFNVLKAGVQSMVNIPGCPFYSCQKGYKGPWIGSGMLQARCPCGAELIFSVENGFAKLYKGPRTCSNYWRGAVPVNARLCGSARPDPTDWTSLVVNYGVRDYCKYEKLGDHIFVTAVSSPNVCFTQVPPTLRAAVAVDGVQVQCYLGEPKTPWTTSACCYGPDGKGKTVKLPFRVDGHTPGVRMQLNLRDALETNDCNSINNTPSDEAAVSALVFKQELRRTNQLLEAISAGVDTTKLPAPSIEEVVVRKRQFRARTGSLTLPPPPRSVPGVSCPESLQRSDPLEGPSNLPSSPPVLQLAMPMPLLGAGECNPFTAIGCAMTETGGGPDDLPSYPPKKEVSEWSDGSWSTTTTASSYVTGPPYPKIRGKDSTQSAPAKRPTKKKLGKSEFSCSMSYTWTDVISFKTASKVLSATRAITSGFLKQRSLVYVTEPRDAELRKQKVTINRQPLFPPSYHKQVRLAKEKASKVVGVMWDYDEVAAHTPSKSAKSHITGLRGTDVRSGAARKAVLDLQKCVEAGEIPSHYRQTVIVPKEEVFVKTPQKPTKKPPRLISYPHLEMRCVEKMYYGQVAPDVVKAVMGDAYGFVDPRTRVKRLLSMWSPDAVGATCDTVCFDSTITPEDIMVETDIYSAAKLSDQHRAGIHTIARQLYAGGPMIAYDGREIGYRRCRSSGVYTTSSSNSLTCWLKVNAAAEQAGMKNPRFLICGDDCTVIWKSAGADADKQAMRVFASWMKVMGAPQDCVPQPKYSLEELTSCSSNVTSGITKSGKPYYFLTRDPRIPLGRCSAEGLGYNPSAAWIGYLIHHYPCLWVSRVLAVHFMEQMLFEDKLPETVTFDWYGKNYTVPVEDLPSIIAGVHGIEAFSVVRYTNAEILRVSQSLTDMTMPPLRAWRKKARAVLASAKRRGGAHAKLARFLLWHATSRPLPDLDKTSVARYTTFNYCDVYSPEGDVFVTPQRRLQKFLVKYLAVIVFALGLIAVGLAIS.

2 stretches are compositionally biased toward polar residues: residues 1–10 (MPVISTQTSP) and 21–32 (QTQASYPVSIKT). The disordered stretch occupies residues 1–49 (MPVISTQTSPVPAPRTRKNKQTQASYPVSIKTSVERGQRAKRKVQRDAR). A helical membrane pass occupies residues 133–153 (WATGWFGVHLFVVCLLSLACP). 3 N-linked (GlcNAc...) asparagine; by host glycosylation sites follow: N165, N212, and N264. A helical membrane pass occupies residues 324–344 (LIYYASRGKWYQLLLALMLYI). Residues N380, N400, N422, N446, N467, and N512 are each glycosylated (N-linked (GlcNAc...) asparagine; by host). Transmembrane regions (helical) follow at residues 582 to 602 (AVVL…AYLC), 628 to 648 (AGWD…FFIC), 660 to 680 (LLGF…AAAA), 706 to 726 (PRIA…LLHL), and 737 to 757 (IIGG…RFGF). An N-linked (GlcNAc...) asparagine; by host glycan is attached at N782. 2 helical membrane passes run 790 to 810 (FLLV…TFCV) and 847 to 867 (WYSH…GVFF). The Peptidase C18 domain maps to 819–940 (TSSAASFFGT…AMPPDGWAIT (122 aa)). Residues H870, E888, and C909 each act as for protease NS2 activity; shared with dimeric partner in the active site. Positions 941–1122 (APFTLQCLSE…VCAGYHPQYT (182 aa)) constitute a Peptidase S29 domain. Residues H997 and D1021 each act as charge relay system; for serine protease NS3 activity in the active site. Residues C1037 and C1039 each coordinate Zn(2+). An N-linked (GlcNAc...) asparagine; by host glycan is attached at N1057. The active-site Charge relay system; for serine protease NS3 activity is the S1079. Zn(2+) contacts are provided by C1085 and H1089. Positions 1131-1281 (PTVPNEYSVQ…ANITEIQLTD (151 aa)) constitute a Helicase ATP-binding domain. 1144-1151 (APTGSGKS) serves as a coordination point for ATP. The Mg(2+) site is built by S1151 and E1229. Residues 1228–1231 (DECH) carry the DECH box motif. N-linked (GlcNAc...) asparagine; by host glycosylation occurs at N1273. Residues 1284-1449 (TIPFHGKKIK…GLSSTEAQTI (166 aa)) form the Helicase C-terminal domain. An N-linked (GlcNAc...) asparagine; by host glycan is attached at N1559. The next 5 membrane-spanning stretches (helical) occupy residues 1565–1585 (ALAV…FGAT), 1653–1673 (FLGP…GLVT), 1678–1698 (PFAS…PHKI), 1722–1742 (FMMA…GFVF), and 1783–1803 (AAGV…TAGP). C1863 carries the S-palmitoyl cysteine; by host lipid modification. Residues 1864–1884 (GLIAWGLEIWQYVCNFFVICF) traverse the membrane as a helical segment. Residues C1905, C1923, C1925, and C1947 each contribute to the Zn(2+) site. Disordered stretches follow at residues 2139–2178 (TGSL…SPPV) and 2209–2266 (GPDD…TKKK). Polar residues predominate over residues 2226 to 2240 (SDGSWSTTTTASSYV). Residues 2485–2603 (AVGATCDTVC…IWKSAGADAD (119 aa)) form the RdRp catalytic domain. Mg(2+) is bound by residues D2491, D2589, and D2590. N-linked (GlcNAc...) asparagine; by host glycosylation is found at N2640 and N2722. Residues 2844–2864 (VKYLAVIVFALGLIAVGLAIS) traverse the membrane as a helical segment.

Homooligomer. Interacts with E1 (via C-terminus). Interacts with the non-structural protein 5A. Part of the viral assembly initiation complex composed of NS2, E1, E2, NS3, NS4A, NS5A and the core protein. As to quaternary structure, forms a heterodimer with envelope glycoprotein E2. Interacts with the core protein. Interacts with protease NS2. Part of the viral assembly initiation complex composed of NS2, E1, E2, NS3, NS4A, NS5A and the core protein. In terms of assembly, forms a heterodimer with envelope glycoprotein E1. Part of the viral assembly initiation complex composed of NS2, E1, E2, NS3, NS4A, NS5A and the core protein. Homodimer. Interacts with envelope glycoprotein E1. Interacts with envelope glycoprotein E2. Interacts with viroporin p7. Interacts with serine protease/helicase NS3. Part of the replication complex composed of NS2, NS3, NS4A, NS4B, NS5A and the RNA-directed RNA polymerase embedded in an ER-derived membranous web. Part of the viral assembly initiation complex composed of NS2, E1, E2, NS3, NS4A, NS5A and the core protein. As to quaternary structure, interacts with protease NS2. Interacts with non-structural protein 4A; this interaction stabilizes the folding of NS3 serine protease. NS3-NS4A interaction is essential for NS3 activation and allows membrane anchorage of the latter. Interacts with host MAVS; this interaction leads to the cleavage and inhibition of host MAVS. Part of the replication complex composed of NS2, NS3, NS4A, NS4B, NS5A and the RNA-directed RNA polymerase embedded in an ER-derived membranous web. Part of the viral assembly initiation complex composed of NS2, E1, E2, NS3, NS4A, NS5A and the core protein. In terms of assembly, interacts with NS3 serine protease; this interaction stabilizes the folding of NS3 serine protease. NS3-NS4A interaction is essential for NS3 activation and allows membrane anchorage of the latter. Interacts with non-structural protein 5A (via N-terminus). Part of the replication complex composed of NS2, NS3, NS4A, NS4B, NS5A and the RNA-directed RNA polymerase embedded in an ER-derived membranous web. Part of the viral assembly initiation complex composed of NS2, E1, E2, NS3, NS4A, NS5A and the core protein. Monomer. Homodimer; dimerization is required for RNA-binding. Interacts with the core protein. Interacts (via N-terminus) with non-structural protein 4A. Interacts with non-structural protein 4B. Interacts with RNA-directed RNA polymerase. Part of the viral assembly initiation complex composed of NS2, E1, E2, NS3, NS4A, NS5A and the core protein. Part of the replication complex composed of NS2, NS3, NS4A, NS4B, NS5A and the RNA-directed RNA polymerase. Zn(2+) is required as a cofactor. Requires Mg(2+) as cofactor. Mn(2+) serves as cofactor. Specific enzymatic cleavages in vivo yield mature proteins. The structural proteins, core, E1, E2 and p7 are produced by proteolytic processing by host signal peptidases. The other proteins (p7, NS2, NS3, NS4A, NS4B, NS5A and NS5B) are cleaved by the viral proteases. Autoprocessing between NS2 and NS3 is mediated by the NS2 cysteine protease catalytic domain and regulated by the NS3 N-terminal domain. P13 may be further cleaved into p6 and p7 if the internal cleavage site is used. In terms of processing, highly N-glycosylated. Post-translationally, palmitoylated. This modification may play a role in its polymerization or in protein-protein interactions.

It is found in the virion. The protein localises to the host cytoplasm. It localises to the host lipid droplet. The protein resides in the virion membrane. Its subcellular location is the host endoplasmic reticulum membrane. It is found in the host perinuclear region. The protein localises to the host mitochondrion. It localises to the host nucleus. It catalyses the reaction Hydrolysis of four peptide bonds in the viral precursor polyprotein, commonly with Asp or Glu in the P6 position, Cys or Thr in P1 and Ser or Ala in P1'.. The catalysed reaction is a ribonucleoside 5'-triphosphate + H2O = a ribonucleoside 5'-diphosphate + phosphate + H(+). The enzyme catalyses ATP + H2O = ADP + phosphate + H(+). It carries out the reaction RNA(n) + a ribonucleoside 5'-triphosphate = RNA(n+1) + diphosphate. Its function is as follows. Packages viral RNA to form a viral nucleocapsid, and promotes virion budding. Participates in the viral particle production as a result of its interaction with the non-structural protein 5A. Binds RNA and may function as a RNA chaperone to induce the RNA structural rearrangements taking place during virus replication. Modulates viral translation initiation by interacting with viral IRES and 40S ribosomal subunit. Probably affects various cell signaling pathways, host immunity and lipid metabolism. In terms of biological role, forms a heterodimer with envelope glycoprotein E2, which mediates virus attachment to the host cell, virion internalization through clathrin-dependent endocytosis and fusion with host membrane. Fusion with the host cell is most likely mediated by both E1 and E2, through conformational rearrangements of the heterodimer required for fusion rather than a classical class II fusion mechanism. Functionally, forms a heterodimer with envelope glycoprotein E1, which mediates virus attachment to the host cell, virion internalization through clathrin-dependent endocytosis and fusion with host membrane. Fusion with the host cell is most likely mediated by both E1 and E2, through conformational rearrangements of the heterodimer required for fusion rather than a classical class II fusion mechanism. May function as a multimeric ion channel protein (viroporin). Its function is as follows. Cysteine protease required for the proteolytic auto-cleavage between the non-structural proteins NS2 and NS3. The N-terminus of NS3 is required for the function of NS2 protease (active region NS2-3). Promotes the initiation of viral particle assembly by mediating the interaction between structural and non-structural proteins. In terms of biological role, displays three enzymatic activities: serine protease with a chymotrypsin-like fold, NTPase and RNA helicase. NS3 serine protease, in association with NS4A, is responsible for the cleavages of NS3-NS4A, NS4A-NS4B, NS4B-NS5A and NS5A-NS5B. The NS3/NS4A complex prevents phosphorylation of host IRF3, thus preventing the establishment of dsRNA induced antiviral state. NS3 RNA helicase binds to RNA and unwinds both dsDNA and dsRNA in the 3' to 5' direction, and likely resolves RNA complicated stable secondary structures in the template strand. Cleaves host MAVS/CARDIF thereby preventing the establishment of an antiviral state. Functionally, induces a specific membrane alteration that serves as a scaffold for the virus replication complex. This membrane alteration gives rise to the so-called ER-derived membranous web that contains the replication complex. NS4B self-interaction contributes to its function in membranous web formation. Phosphorylated protein that is indispensable for viral replication and assembly. Its function is as follows. RNA-dependent RNA polymerase that performs primer-template recognition and RNA synthesis during viral replication. Initiates RNA transcription/replication at a flavin adenine dinucleotide (FAD), resulting in a 5'- FAD cap on viral RNAs. In this way, recognition of viral 5' RNA by host pattern recognition receptors can be bypassed, thereby evading activation of antiviral pathways. In Hepatitis GB virus B (GBV-B), this protein is Genome polyprotein.